Reading from the N-terminus, the 311-residue chain is Ceroid-lipofuscinosis neuronal protein 6 (311 aa).

7 consecutive transmembrane segments (helical) span residues 56–76, 81–101, 111–131, 179–199, 204–224, 225–245, and 260–280; these read WVLD…WFPL, VGDY…LKLI, SITY…LVGD, CMWY…CFTA, SLIP…YWYL, VTEG…LALV, and LFLF…VAWL.

Interacts with CRMP2. Interacts with CLN5. Interacts with CLN3.

The protein localises to the endoplasmic reticulum membrane. Its subcellular location is the endoplasmic reticulum. This Homo sapiens (Human) protein is Ceroid-lipofuscinosis neuronal protein 6 (CLN6).